Here is a 159-residue protein sequence, read N- to C-terminus: Deoxyuridine 5'-triphosphate nucleotidohydrolase (159 aa).

Substrate contacts are provided by residues arginine 78 to glycine 80, asparagine 91, leucine 95 to aspartate 97, and methionine 105.

Belongs to the dUTPase family. It depends on Mg(2+) as a cofactor.

It catalyses the reaction dUTP + H2O = dUMP + diphosphate + H(+). It functions in the pathway pyrimidine metabolism; dUMP biosynthesis; dUMP from dCTP (dUTP route): step 2/2. In terms of biological role, this enzyme is involved in nucleotide metabolism: it produces dUMP, the immediate precursor of thymidine nucleotides and it decreases the intracellular concentration of dUTP so that uracil cannot be incorporated into DNA. This is Deoxyuridine 5'-triphosphate nucleotidohydrolase from Buchnera aphidicola subsp. Schizaphis graminum (strain Sg).